We begin with the raw amino-acid sequence, 498 residues long: Probable cytosol aminopeptidase (498 aa).

Positions 262 and 267 each coordinate Mn(2+). The active site involves lysine 274. Mn(2+)-binding residues include aspartate 285, aspartate 344, and glutamate 346. Arginine 348 is an active-site residue.

It belongs to the peptidase M17 family. The cofactor is Mn(2+).

The protein localises to the cytoplasm. The enzyme catalyses Release of an N-terminal amino acid, Xaa-|-Yaa-, in which Xaa is preferably Leu, but may be other amino acids including Pro although not Arg or Lys, and Yaa may be Pro. Amino acid amides and methyl esters are also readily hydrolyzed, but rates on arylamides are exceedingly low.. It catalyses the reaction Release of an N-terminal amino acid, preferentially leucine, but not glutamic or aspartic acids.. Its function is as follows. Presumably involved in the processing and regular turnover of intracellular proteins. Catalyzes the removal of unsubstituted N-terminal amino acids from various peptides. The polypeptide is Probable cytosol aminopeptidase (Phytoplasma mali (strain AT)).